A 919-amino-acid polypeptide reads, in one-letter code: GPI ethanolamine phosphate transferase 1 (919 aa).

Topologically, residues 1 to 8 are cytoplasmic; the sequence is MWSRHRLY. The chain crosses the membrane as a helical span at residues 9 to 29; the sequence is FIVAGVLFHLFYLWSIFDIYF. Topologically, residues 30–456 are lumenal; sequence VSPLVHGMKQ…TTYNWRFIRT (427 aa). N-linked (GlcNAc...) asparagine glycosylation is found at asparagine 138, asparagine 196, asparagine 201, asparagine 285, and asparagine 311. The helical transmembrane segment at 457-477 threads the bilayer; sequence IVTLGFLGWIVYSFSIFLRLF. Residues 478 to 487 are Cytoplasmic-facing; that stretch reads ILNRDYNSHK. A helical transmembrane segment spans residues 488 to 508; sequence SLLNYFIFGSLTIILNYVLYY. The Lumenal portion of the chain corresponds to 509 to 510; sequence QK. Residues 511–531 traverse the membrane as a helical segment; the sequence is APFNYYMYLFFPLIFWSEIFT. Over 532–558 the chain is Cytoplasmic; the sequence is DRVVLDDGVKEFLKGISIPKRIILVSA. Residues 559–579 form a helical membrane-spanning segment; that stretch reads IILVYESIVYAFFDRWIFSLI. Residues 580-598 are Lumenal-facing; sequence FNMLSFYPLICGYRDWKRN. The helical transmembrane segment at 599–619 threads the bilayer; sequence TLWFITGAAISVFTLLDAVKI. A topological domain (cytoplasmic) is located at residue glutamate 620. A helical transmembrane segment spans residues 621-641; it reads SLTQINIASGLIVLTALSGFL. Residues 642 to 653 lie on the Lumenal side of the membrane; sequence HLRKQLNSYTTT. The helical transmembrane segment at 654 to 674 threads the bilayer; that stretch reads VFICQILLVILMVLATNKSIV. The Cytoplasmic portion of the chain corresponds to 675 to 686; that stretch reads SLQNRTGLPRDA. A helical transmembrane segment spans residues 687-707; the sequence is QVAGWVILVVSLLLMPLIHYM. The Lumenal portion of the chain corresponds to 708–718; that stretch reads KPNNNYKVRML. A helical membrane pass occupies residues 719-739; sequence IIFLTFAPTFIILTISFESFF. The Cytoplasmic segment spans residues 740–773; sequence YLVFSAYIVQWIEIESKLKEQTPNTSHYKQLIRV. A helical membrane pass occupies residues 774–794; it reads TIIGFFLLQNAFFGTGNVASI. Residues 795–815 are Lumenal-facing; that stretch reads SSFSLDSVYRLMPIFDPFPMG. A helical transmembrane segment spans residues 816-836; it reads ALLVIKLIIPYIILSAGLGIL. At 837 to 845 the chain is on the cytoplasmic side; it reads NLKLHIKDY. Residues 846-866 traverse the membrane as a helical segment; the sequence is TISTLIISTSDILSLNFFYLL. The Lumenal portion of the chain corresponds to 867–882; the sequence is KTEGSWLDIGITISNY. Residues 883–903 traverse the membrane as a helical segment; sequence CLAILSSLFMLILEIVAHVVL. The Cytoplasmic portion of the chain corresponds to 904–919; that stretch reads KNVQLSKPVIASKKTN.

It belongs to the PIGG/PIGN/PIGO family. PIGN subfamily.

It is found in the endoplasmic reticulum membrane. It functions in the pathway glycolipid biosynthesis; glycosylphosphatidylinositol-anchor biosynthesis. Its function is as follows. Ethanolamine phosphate transferase involved in glycosylphosphatidylinositol-anchor biosynthesis. Transfers ethanolamine phosphate to the first alpha-1,4-linked mannose of the glycosylphosphatidylinositol precursor of GPI-anchor. The sequence is that of GPI ethanolamine phosphate transferase 1 (MCD4) from Kluyveromyces lactis (strain ATCC 8585 / CBS 2359 / DSM 70799 / NBRC 1267 / NRRL Y-1140 / WM37) (Yeast).